The sequence spans 101 residues: Trp operon repressor homolog (101 aa).

Residues Gln59–Met82 mediate DNA binding.

The protein belongs to the TrpR family. Homodimer.

It localises to the cytoplasm. Functionally, this protein is an aporepressor. When complexed with L-tryptophan it binds the operator region of the trp operon and prevents the initiation of transcription. The chain is Trp operon repressor homolog from Actinobacillus succinogenes (strain ATCC 55618 / DSM 22257 / CCUG 43843 / 130Z).